We begin with the raw amino-acid sequence, 200 residues long: Charged multivesicular body protein 6-A (200 aa).

Gly2 carries N-myristoyl glycine lipidation. Residues 9–102 (RRSRVTEQDK…FAQIEMKVIE (94 aa)) adopt a coiled-coil conformation. The tract at residues 166 to 200 (EDLELPEAPSEPLPDTIPEKQAVKNKPKPQMIAAS) is disordered. Positions 168–179 (LELPEAPSEPLP) match the Type-2 MIT-interacting motif motif.

The protein belongs to the SNF7 family. Probable core component of the endosomal sorting required for transport complex III (ESCRT-III). ESCRT-III components are thought to multimerize to form a flat lattice on the perimeter membrane of the endosome.

It localises to the endomembrane system. It is found in the late endosome membrane. Probable core component of the endosomal sorting required for transport complex III (ESCRT-III) which is involved in multivesicular bodies (MVBs) formation and sorting of endosomal cargo proteins into MVBs. MVBs contain intraluminal vesicles (ILVs) that are generated by invagination and scission from the limiting membrane of the endosome and mostly are delivered to lysosomes enabling degradation of membrane proteins, such as stimulated growth factor receptors, lysosomal enzymes and lipids. In the ESCRT-III complex, it probably serves as an acceptor for the ESCRT-II complex on endosomal membranes. This is Charged multivesicular body protein 6-A (chmp6-a) from Xenopus laevis (African clawed frog).